The chain runs to 459 residues: Argininosuccinate lyase (459 aa).

It belongs to the lyase 1 family. Argininosuccinate lyase subfamily.

The protein resides in the cytoplasm. It carries out the reaction 2-(N(omega)-L-arginino)succinate = fumarate + L-arginine. Its pathway is amino-acid biosynthesis; L-arginine biosynthesis; L-arginine from L-ornithine and carbamoyl phosphate: step 3/3. This is Argininosuccinate lyase from Oceanobacillus iheyensis (strain DSM 14371 / CIP 107618 / JCM 11309 / KCTC 3954 / HTE831).